The sequence spans 947 residues: Valine--tRNA ligase (947 aa).

The 'HIGH' region signature appears at 45–55 (PNVTGSLHMGH). The 'KMSKS' region motif lies at 591 to 595 (KMSKS). K594 contributes to the ATP binding site.

It belongs to the class-I aminoacyl-tRNA synthetase family. ValS type 1 subfamily. In terms of assembly, monomer.

It is found in the cytoplasm. It carries out the reaction tRNA(Val) + L-valine + ATP = L-valyl-tRNA(Val) + AMP + diphosphate. Functionally, catalyzes the attachment of valine to tRNA(Val). As ValRS can inadvertently accommodate and process structurally similar amino acids such as threonine, to avoid such errors, it has a 'posttransfer' editing activity that hydrolyzes mischarged Thr-tRNA(Val) in a tRNA-dependent manner. This Rhizobium meliloti (strain 1021) (Ensifer meliloti) protein is Valine--tRNA ligase.